The sequence spans 466 residues: Bifunctional protein GlmU (466 aa).

Positions 1 to 236 (MEVMPQPLTI…PAEALGINDR (236 aa)) are pyrophosphorylase. Residues 13 to 16 (LAAG), K27, Q79, 84 to 85 (GT), 107 to 109 (YGD), G146, E161, N176, and N234 contribute to the UDP-N-acetyl-alpha-D-glucosamine site. Residue D109 participates in Mg(2+) binding. N234 lines the Mg(2+) pocket. The segment at 237–257 (AQLAEVDRIFRDRKRRAVMAA) is linker. The interval 258–466 (GVTLIQPETI…AKKRRKLAKT (209 aa)) is N-acetyltransferase. Residues R340 and K358 each contribute to the UDP-N-acetyl-alpha-D-glucosamine site. The active-site Proton acceptor is H370. The UDP-N-acetyl-alpha-D-glucosamine site is built by Y373 and N384. Acetyl-CoA-binding positions include A387, 393–394 (NY), S412, A430, and R447.

The protein in the N-terminal section; belongs to the N-acetylglucosamine-1-phosphate uridyltransferase family. It in the C-terminal section; belongs to the transferase hexapeptide repeat family. Homotrimer. Requires Mg(2+) as cofactor.

The protein localises to the cytoplasm. It catalyses the reaction alpha-D-glucosamine 1-phosphate + acetyl-CoA = N-acetyl-alpha-D-glucosamine 1-phosphate + CoA + H(+). The enzyme catalyses N-acetyl-alpha-D-glucosamine 1-phosphate + UTP + H(+) = UDP-N-acetyl-alpha-D-glucosamine + diphosphate. Its pathway is nucleotide-sugar biosynthesis; UDP-N-acetyl-alpha-D-glucosamine biosynthesis; N-acetyl-alpha-D-glucosamine 1-phosphate from alpha-D-glucosamine 6-phosphate (route II): step 2/2. The protein operates within nucleotide-sugar biosynthesis; UDP-N-acetyl-alpha-D-glucosamine biosynthesis; UDP-N-acetyl-alpha-D-glucosamine from N-acetyl-alpha-D-glucosamine 1-phosphate: step 1/1. It participates in bacterial outer membrane biogenesis; LPS lipid A biosynthesis. Its function is as follows. Catalyzes the last two sequential reactions in the de novo biosynthetic pathway for UDP-N-acetylglucosamine (UDP-GlcNAc). The C-terminal domain catalyzes the transfer of acetyl group from acetyl coenzyme A to glucosamine-1-phosphate (GlcN-1-P) to produce N-acetylglucosamine-1-phosphate (GlcNAc-1-P), which is converted into UDP-GlcNAc by the transfer of uridine 5-monophosphate (from uridine 5-triphosphate), a reaction catalyzed by the N-terminal domain. This Solibacter usitatus (strain Ellin6076) protein is Bifunctional protein GlmU.